Reading from the N-terminus, the 213-residue chain is Redox-sensing transcriptional repressor Rex (213 aa).

Positions 17-56 form a DNA-binding region, H-T-H motif; that stretch reads LYYRIFKRFHSENIEKASSKQIAEAIGIDSATVRRDFSYF. 91–96 serves as a coordination point for NAD(+); the sequence is GVGNIG.

The protein belongs to the transcriptional regulatory Rex family. In terms of assembly, homodimer.

The protein resides in the cytoplasm. In terms of biological role, modulates transcription in response to changes in cellular NADH/NAD(+) redox state. The polypeptide is Redox-sensing transcriptional repressor Rex (Streptococcus mutans serotype c (strain ATCC 700610 / UA159)).